Reading from the N-terminus, the 287-residue chain is Polyamine aminopropyltransferase (287 aa).

In terms of domain architecture, PABS spans 5 to 238; it reads EIWYETLHAN…GIMTFAWASN (234 aa). An S-methyl-5'-thioadenosine-binding site is contributed by Q33. Spermidine contacts are provided by H64 and D88. Residues E108 and 140–141 each bind S-methyl-5'-thioadenosine; that span reads DG. D158 acts as the Proton acceptor in catalysis. 158–161 serves as a coordination point for spermidine; that stretch reads DCTD. P165 lines the S-methyl-5'-thioadenosine pocket.

It belongs to the spermidine/spermine synthase family. In terms of assembly, homodimer or homotetramer.

It is found in the cytoplasm. The catalysed reaction is S-adenosyl 3-(methylsulfanyl)propylamine + putrescine = S-methyl-5'-thioadenosine + spermidine + H(+). The protein operates within amine and polyamine biosynthesis; spermidine biosynthesis; spermidine from putrescine: step 1/1. In terms of biological role, catalyzes the irreversible transfer of a propylamine group from the amino donor S-adenosylmethioninamine (decarboxy-AdoMet) to putrescine (1,4-diaminobutane) to yield spermidine. This is Polyamine aminopropyltransferase from Pectobacterium atrosepticum (strain SCRI 1043 / ATCC BAA-672) (Erwinia carotovora subsp. atroseptica).